A 292-amino-acid chain; its full sequence is NAD kinase (292 aa).

Catalysis depends on Asp64, which acts as the Proton acceptor. NAD(+) is bound by residues Asp64–Gly65, Asn138–Asp139, Arg149, Arg166, Asp168, Thr179–Ser184, and Gln238.

The protein belongs to the NAD kinase family. It depends on a divalent metal cation as a cofactor.

It is found in the cytoplasm. The enzyme catalyses NAD(+) + ATP = ADP + NADP(+) + H(+). Functionally, involved in the regulation of the intracellular balance of NAD and NADP, and is a key enzyme in the biosynthesis of NADP. Catalyzes specifically the phosphorylation on 2'-hydroxyl of the adenosine moiety of NAD to yield NADP. This chain is NAD kinase, found in Oleidesulfovibrio alaskensis (strain ATCC BAA-1058 / DSM 17464 / G20) (Desulfovibrio alaskensis).